Here is a 557-residue protein sequence, read N- to C-terminus: Aerobic glycerol-3-phosphate dehydrogenase (557 aa).

21–49 (DVVIIGGGITGAGIALDASERGMKVALVE) serves as a coordination point for FAD.

It belongs to the FAD-dependent glycerol-3-phosphate dehydrogenase family. Requires FAD as cofactor.

It localises to the cytoplasm. The catalysed reaction is a quinone + sn-glycerol 3-phosphate = dihydroxyacetone phosphate + a quinol. It participates in polyol metabolism; glycerol degradation via glycerol kinase pathway; glycerone phosphate from sn-glycerol 3-phosphate (aerobic route): step 1/1. The protein is Aerobic glycerol-3-phosphate dehydrogenase (glpD) of Staphylococcus saprophyticus subsp. saprophyticus (strain ATCC 15305 / DSM 20229 / NCIMB 8711 / NCTC 7292 / S-41).